The sequence spans 240 residues: ATP-dependent dethiobiotin synthetase BioD (240 aa).

15-20 serves as a coordination point for ATP; the sequence is EIGKTF. Thr19 is a Mg(2+) binding site. The active site involves Lys40. ATP is bound by residues Asp57, 118 to 121, and 178 to 179; these read EGVG and NR. Residues Asp57 and Glu118 each contribute to the Mg(2+) site.

This sequence belongs to the dethiobiotin synthetase family. As to quaternary structure, homodimer. The cofactor is Mg(2+).

It localises to the cytoplasm. The enzyme catalyses (7R,8S)-7,8-diammoniononanoate + CO2 + ATP = (4R,5S)-dethiobiotin + ADP + phosphate + 3 H(+). The protein operates within cofactor biosynthesis; biotin biosynthesis; biotin from 7,8-diaminononanoate: step 1/2. Functionally, catalyzes a mechanistically unusual reaction, the ATP-dependent insertion of CO2 between the N7 and N8 nitrogen atoms of 7,8-diaminopelargonic acid (DAPA, also called 7,8-diammoniononanoate) to form a ureido ring. This is ATP-dependent dethiobiotin synthetase BioD from Burkholderia thailandensis (strain ATCC 700388 / DSM 13276 / CCUG 48851 / CIP 106301 / E264).